Consider the following 403-residue polypeptide: Protein-export membrane protein SecD (403 aa).

The next 6 helical transmembrane spans lie at 14–34, 238–258, 265–285, 294–314, 336–356, and 365–385; these read VILL…MGIQ, FAEG…VILI, ILVL…LGAA, LAAI…QIII, FFII…LAYI, and IGLL…GVFI.

The protein belongs to the SecD/SecF family. SecD subfamily. As to quaternary structure, part of the protein translocation apparatus. Forms a complex with SecF.

It is found in the cell membrane. In terms of biological role, involved in protein export. The protein is Protein-export membrane protein SecD of Methanothermobacter thermautotrophicus (strain ATCC 29096 / DSM 1053 / JCM 10044 / NBRC 100330 / Delta H) (Methanobacterium thermoautotrophicum).